The sequence spans 252 residues: F-box/SPRY domain-containing protein 1 (252 aa).

One can recognise an F-box domain in the interval 1–48; sequence MVDPLCNYNVLEAIFSYLELSDLSRCSQVCKSWYHFLNDENSDVWRWH. One can recognise a B30.2/SPRY domain in the interval 58–250; the sequence is IKSDLLASVT…VSMVYLGTPL (193 aa).

This sequence belongs to the FBXO45/Fsn family. As to quaternary structure, component of an E3 ubiquitin ligase complex composed of hiw and Fsn.

It is found in the synapse. It participates in protein modification; protein ubiquitination. In terms of biological role, required in the presynaptic motoneuron to down-regulate the levels of wnd and restrain synaptic terminal growth at the neuromuscular junction (NMJ). This Drosophila mojavensis (Fruit fly) protein is F-box/SPRY domain-containing protein 1.